Consider the following 409-residue polypeptide: Na(+)-translocating NADH-quinone reductase subunit F (409 aa).

Residues 5-25 (FIFGIGAFTAIVLVLAVVILI) form a helical membrane-spanning segment. The 2Fe-2S ferredoxin-type domain occupies 34 to 128 (GDITISINND…SMDVELPEEV (95 aa)). Residues Cys-71, Cys-77, Cys-80, and Cys-112 each contribute to the [2Fe-2S] cluster site. One can recognise an FAD-binding FR-type domain in the interval 131 to 271 (VKKWECTVIS…SGPFGEFFAK (141 aa)).

This sequence belongs to the NqrF family. As to quaternary structure, composed of six subunits; NqrA, NqrB, NqrC, NqrD, NqrE and NqrF. The cofactor is [2Fe-2S] cluster. Requires FAD as cofactor.

It localises to the cell inner membrane. It catalyses the reaction a ubiquinone + n Na(+)(in) + NADH + H(+) = a ubiquinol + n Na(+)(out) + NAD(+). In terms of biological role, NQR complex catalyzes the reduction of ubiquinone-1 to ubiquinol by two successive reactions, coupled with the transport of Na(+) ions from the cytoplasm to the periplasm. The first step is catalyzed by NqrF, which accepts electrons from NADH and reduces ubiquinone-1 to ubisemiquinone by a one-electron transfer pathway. The sequence is that of Na(+)-translocating NADH-quinone reductase subunit F from Mannheimia succiniciproducens (strain KCTC 0769BP / MBEL55E).